The sequence spans 200 residues: Probable GTP-binding protein EngB (200 aa).

The 175-residue stretch at 26-200 (SIPEVALAGR…IYEIAQCIKK (175 aa)) folds into the EngB-type G domain. GTP contacts are provided by residues 34 to 41 (GRSNVGKS), 61 to 65 (GCTRQ), 80 to 83 (DLPG), 147 to 150 (TKID), and 179 to 181 (VSS). Positions 41 and 63 each coordinate Mg(2+).

The protein belongs to the TRAFAC class TrmE-Era-EngA-EngB-Septin-like GTPase superfamily. EngB GTPase family. Mg(2+) serves as cofactor.

Its function is as follows. Necessary for normal cell division and for the maintenance of normal septation. The protein is Probable GTP-binding protein EngB of Ehrlichia ruminantium (strain Welgevonden).